Here is a 743-residue protein sequence, read N- to C-terminus: Zinc transporter ZIP6 (743 aa).

The signal sequence occupies residues 1–20; it reads MARKLSVILILTFALSVTNP. The Extracellular segment spans residues 21 to 313; it reads LHELKAAAFP…PKTYSLQIAW (293 aa). N-linked (GlcNAc...) asparagine glycosylation is present at N67. The span at 96–116 shows a compositional bias: basic and acidic residues; that stretch reads HEHHSDHEHHSDHEHHSDHEH. Disordered stretches follow at residues 96-174 and 190-245; these read HEHH…SASE and LETI…SRNT. A compositionally biased stretch (basic residues) spans 117–132; it reads HSHRNHAASGKNKRKA. Composition is skewed to basic and acidic residues over residues 133–147 and 155–167; these read LCPD…KDPR and HRSE…RNVK. The span at 206 to 215 shows a compositional bias: polar residues; the sequence is VSSSTPPSVT. A compositionally biased stretch (basic and acidic residues) spans 227-237; that stretch reads KTNESVSEPRK. N-linked (GlcNAc...) asparagine glycosylation is found at N229, N254, and N271. A helical transmembrane segment spans residues 314–334; the sequence is VGGFIAISIISFLSLLGVILV. The Cytoplasmic portion of the chain corresponds to 335 to 343; sequence PLMNRVFFK. A helical transmembrane segment spans residues 344–364; sequence FLLSFLVALAVGTLSGDAFLH. Topologically, residues 365–411 are extracellular; that stretch reads LLPHSHASHHHSHSHEEPAMEMKRGPLFSHLSSQNIEESAYFDSTWK. The helical transmembrane segment at 412–432 threads the bilayer; it reads GLTALGGLYFMFLVEHVLTLI. Over 433–645 the chain is Cytoplasmic; that stretch reads KQFKDKKKKN…LKAGMTVKQA (213 aa). Residues 452–474 adopt a coiled-coil conformation; that stretch reads VEIKKQLSKYESQLSTNEEKVDT. Phosphoserine occurs at positions 459 and 466. A helical membrane pass occupies residues 646–666; that stretch reads VLYNALSAMLAYLGMATGIFI. The Extracellular portion of the chain corresponds to 667–674; sequence GHYAENVS. The N-linked (GlcNAc...) asparagine glycan is linked to N672. The helical transmembrane segment at 675-695 threads the bilayer; it reads MWIFALTAGLFMYVALVDMVP. The Cytoplasmic portion of the chain corresponds to 696–712; that stretch reads EMLHNDASDHGCSRWGY. Residues 713–733 traverse the membrane as a helical segment; it reads FFLQNAGMLLGFGIMLLISIF. Topologically, residues 734–743 are extracellular; sequence EHKIVFRINF.

Belongs to the ZIP transporter (TC 2.A.5) family. In terms of assembly, interacts with SLC39A10; which triggers cells to undergo EMT and mitosis. Found in a complex with SLC39A6, SLC39A10 and with the 'Ser-727' phosphorylated form of STAT3 throughout mitosis. Found in a complex with SLC39A6, SLC39A10 and with NCAM1; this complex controls NCAM1 phosphorylation and integration into focal adhesion complexes during epithelial-to-mesenchymal transition (EMT). Found in a complex with SLC39A6, SLC39A10 and with GSK3B that controls NCAM1 phosphorylation. In terms of processing, cleaved on the N-terminus before locating to the plasma membrane. N-glycosylated. Post-translationally, phosphorylated by ZAP70 in response to TCR stimulation leading to its activation.

Its subcellular location is the cell membrane. It is found in the cell projection. The protein localises to the lamellipodium membrane. The protein resides in the membrane raft. It localises to the apical cell membrane. It carries out the reaction Zn(2+)(in) = Zn(2+)(out). Zinc-influx transporter which plays a role in zinc homeostasis and in the induction of epithelial-to-mesenchymal transition (EMT). When associated with SLC39A10, the heterodimer formed by SLC39A10 and SLC39A6 mediates cellular zinc uptake to trigger cells to undergo epithelial- to-mesenchymal transition (EMT). The SLC39A10-SLC39A6 heterodimer also controls NCAM1 phosphorylation and its integration into focal adhesion complexes during EMT. Zinc influx inactivates GSK3B, enabling unphosphorylated SNAI1 in the nucleus to down-regulate adherence genes such as CDH1, causing loss of cell adherence. In addition, the SLC39A10-SLC39A6 heterodimer plays an essentiel role in initiating mitosis by importing zinc into cells to initiate a pathway resulting in the onset of mitosis. Participates in the T-cell receptor signaling regulation by mediating cellular zinc uptake into activated lymphocytes. Regulates the zinc influx necessary for proper meiotic progression to metaphase II (MII) that allows the oocyte-to-egg transition. The chain is Zinc transporter ZIP6 from Pongo abelii (Sumatran orangutan).